A 132-amino-acid chain; its full sequence is D-ribose pyranase (132 aa).

Histidine 20 serves as the catalytic Proton donor. Substrate is bound by residues aspartate 28, histidine 99, and tyrosine 121–asparagine 123.

It belongs to the RbsD / FucU family. RbsD subfamily. As to quaternary structure, homodecamer.

Its subcellular location is the cytoplasm. It carries out the reaction beta-D-ribopyranose = beta-D-ribofuranose. The protein operates within carbohydrate metabolism; D-ribose degradation; D-ribose 5-phosphate from beta-D-ribopyranose: step 1/2. Functionally, catalyzes the interconversion of beta-pyran and beta-furan forms of D-ribose. The protein is D-ribose pyranase of Lactococcus lactis subsp. cremoris (strain SK11).